We begin with the raw amino-acid sequence, 217 residues long: Probable GTP-binding protein EngB (217 aa).

Residues 32–205 enclose the EngB-type G domain; sequence GTPQIAFAGR…RKIVYSLIET (174 aa). Residues 40-47, 67-71, 85-88, 152-155, and 184-186 each bind GTP; these read GRSNAGKS, GKTKL, DLPG, TKID, and VSN. Residues S47 and T69 each contribute to the Mg(2+) site.

Belongs to the TRAFAC class TrmE-Era-EngA-EngB-Septin-like GTPase superfamily. EngB GTPase family. The cofactor is Mg(2+).

Necessary for normal cell division and for the maintenance of normal septation. This is Probable GTP-binding protein EngB from Leptospira interrogans serogroup Icterohaemorrhagiae serovar copenhageni (strain Fiocruz L1-130).